We begin with the raw amino-acid sequence, 331 residues long: Peroxisomal nicotinamide adenine dinucleotide carrier (331 aa).

3 Solcar repeats span residues 2–91, 109–216, and 229–320; these read SDAL…FRNR, VGMF…MLTK, and VTAL…LVKG. 6 helical membrane passes run 5 to 25, 63 to 85, 116 to 136, 180 to 200, 235 to 255, and 293 to 313; these read LING…TYPL, LYGG…YYFY, LVAA…WVIV, VYDE…LIMV, FLLG…LLVV, and YKGM…LFMI.

This sequence belongs to the mitochondrial carrier (TC 2.A.29) family. Homodimer. Expressed in cotyledons, hypocotyls, vascular tissues, trichomes, hydathodes, seeds, pedicels, flowers and stigma.

It localises to the glyoxysome membrane. Its activity is regulated as follows. Inhibited by pyridoxal 5'-phosphate, bathophenanthroline, tannic acid, mersalyl, mercuric chloride and bromocresol purple. In terms of biological role, mediates the NAD(+) import into peroxisomes. Favors the NAD(+)(in)/AMP(out) antiport exchange, but is also able to catalyze a low unidirectional transport that might be essential under special conditions. Transports CoA, dephospho-CoA, acetyl-CoA, adenosine 3',5'-diphosphate (PAP), NAD(+), AMP, ADP and NADH, but has no activity with ATP, GTP, GDP, NADPH, NADP(+) or FAD. Required for peroxisomes proliferation. This chain is Peroxisomal nicotinamide adenine dinucleotide carrier (PXN), found in Arabidopsis thaliana (Mouse-ear cress).